The primary structure comprises 227 residues: Lipoprotein-releasing system ATP-binding protein LolD (227 aa).

An ABC transporter domain is found at 6-227 (LTSQKLYKSY…LHEGSLYARE (222 aa)). 42 to 49 (GPSGSGKS) is an ATP binding site.

This sequence belongs to the ABC transporter superfamily. Lipoprotein translocase (TC 3.A.1.125) family. In terms of assembly, the complex is composed of two ATP-binding proteins (LolD) and two transmembrane proteins (LolC and LolE).

The protein resides in the cell inner membrane. Part of the ABC transporter complex LolCDE involved in the translocation of mature outer membrane-directed lipoproteins, from the inner membrane to the periplasmic chaperone, LolA. Responsible for the formation of the LolA-lipoprotein complex in an ATP-dependent manner. The sequence is that of Lipoprotein-releasing system ATP-binding protein LolD from Legionella pneumophila (strain Paris).